The sequence spans 260 residues: Adenosylcobinamide-GDP ribazoletransferase (260 aa).

Transmembrane regions (helical) follow at residues 3 to 23, 36 to 56, 60 to 80, 108 to 128, 133 to 153, 180 to 200, 206 to 226, and 239 to 259; these read APLWLRDLAGAWIFYSVLPAW, FAPWIGLVLGGLQSFLWLVLI, WPTSAVTLLVIGLGAWLSGGL, VGASGVQALLVVVLLQIASLL, LAPLALLIAAFWGRCAPLWAM, ALPACLVLLLALTVVPSLMIV, MVLMAGIGVGVLPAFLVPELL, and GASVVLVETITLLLLAVLLPA.

Belongs to the CobS family. Requires Mg(2+) as cofactor.

The protein resides in the cell inner membrane. The enzyme catalyses alpha-ribazole + adenosylcob(III)inamide-GDP = adenosylcob(III)alamin + GMP + H(+). It catalyses the reaction alpha-ribazole 5'-phosphate + adenosylcob(III)inamide-GDP = adenosylcob(III)alamin 5'-phosphate + GMP + H(+). The protein operates within cofactor biosynthesis; adenosylcobalamin biosynthesis; adenosylcobalamin from cob(II)yrinate a,c-diamide: step 7/7. In terms of biological role, joins adenosylcobinamide-GDP and alpha-ribazole to generate adenosylcobalamin (Ado-cobalamin). Also synthesizes adenosylcobalamin 5'-phosphate from adenosylcobinamide-GDP and alpha-ribazole 5'-phosphate. In Prochlorococcus marinus (strain MIT 9313), this protein is Adenosylcobinamide-GDP ribazoletransferase.